A 600-amino-acid chain; its full sequence is Mitoguardin 1 (600 aa).

2 consecutive transmembrane segments (helical) span residues 15–32 and 38–58; these read TYAV…YSLS and PVAK…IFLA. Ser257 and Ser261 each carry phosphoserine.

Belongs to the mitoguardin family. Homodimer and heterodimer; forms heterodimers with MIGA2. Interacts with PLD6/MitoPLD.

The protein resides in the mitochondrion outer membrane. Regulator of mitochondrial fusion. Acts by forming homo- and heterodimers at the mitochondrial outer membrane and facilitating the formation of PLD6/MitoPLD dimers. May act by regulating phospholipid metabolism via PLD6/MitoPLD. This Mus musculus (Mouse) protein is Mitoguardin 1.